The chain runs to 252 residues: MLKSGFYLLGGVVGAASSLPAFVAATTRSIWDPVNADDVAAVGEITALTALGHMKQSMMSDRTGRMILRTQPRVTDETLEFASRQPPGTFGHRYAQFMKFNRFTPNGRTPVAHIADPTLAYVMQRQRETHDFLHTCIGCGRTVEEEIIVKLLEWRHTGLPIGLLAVIGSLPWLSRQQIRNMELYFEWAEVNAPNQRHGEVNIPYITNVWWEYYLDKPYEQLLADTGITPIDVFLQQKKGKTALANGEAIDGK.

4 residues coordinate Zn(2+): histidine 130, aspartate 131, histidine 134, and glutamate 146.

Belongs to the COQ4 family. Component of a multi-subunit COQ enzyme complex. The cofactor is Zn(2+).

Its subcellular location is the mitochondrion inner membrane. It catalyses the reaction a 4-hydroxy-3-methoxy-5-(all-trans-polyprenyl)benzoate + H(+) = a 2-methoxy-6-(all-trans-polyprenyl)phenol + CO2. It functions in the pathway cofactor biosynthesis; ubiquinone biosynthesis. Lyase that catalyzes the C1-decarboxylation of 4-hydroxy-3-methoxy-5-(all-trans-polyprenyl)benzoic acid into 2-methoxy-6-(all-trans-polyprenyl)phenol during ubiquinone biosynthesis. In Trypanosoma cruzi (strain CL Brener), this protein is Ubiquinone biosynthesis protein COQ4 homolog 1, mitochondrial.